Reading from the N-terminus, the 1430-residue chain is DNA-directed RNA polymerase subunit beta' (1430 aa).

Cys-71, Cys-73, Cys-86, and Cys-89 together coordinate Zn(2+). Positions 461, 463, and 465 each coordinate Mg(2+). 4 residues coordinate Zn(2+): Cys-815, Cys-889, Cys-896, and Cys-899. A disordered region spans residues 1388–1430 (RRQEAPAPAATPEQQAEEVFASLGQGEGEGPSPSDEASGPEVE). Residues 1392–1405 (APAPAATPEQQAEE) show a composition bias toward low complexity.

Belongs to the RNA polymerase beta' chain family. The RNAP catalytic core consists of 2 alpha, 1 beta, 1 beta' and 1 omega subunit. When a sigma factor is associated with the core the holoenzyme is formed, which can initiate transcription. Mg(2+) is required as a cofactor. The cofactor is Zn(2+).

The catalysed reaction is RNA(n) + a ribonucleoside 5'-triphosphate = RNA(n+1) + diphosphate. Its function is as follows. DNA-dependent RNA polymerase catalyzes the transcription of DNA into RNA using the four ribonucleoside triphosphates as substrates. This Halorhodospira halophila (strain DSM 244 / SL1) (Ectothiorhodospira halophila (strain DSM 244 / SL1)) protein is DNA-directed RNA polymerase subunit beta'.